A 191-amino-acid chain; its full sequence is Putative manganese efflux pump MntP (191 aa).

The next 6 helical transmembrane spans lie at 3 to 23 (PISI…AAIG), 37 to 57 (LRAG…GWLL), 65 to 85 (VEAF…IHMI), 107 to 129 (WKLA…GLAF), 144 to 164 (CTLT…SMVG), and 169 to 189 (IIGG…HLHG).

Belongs to the MntP (TC 9.B.29) family.

The protein localises to the cell inner membrane. Probably functions as a manganese efflux pump. The chain is Putative manganese efflux pump MntP from Stenotrophomonas maltophilia (strain R551-3).